The chain runs to 208 residues: Adapter protein MecA (208 aa).

The protein belongs to the MecA family. Homodimer.

Functionally, enables the recognition and targeting of unfolded and aggregated proteins to the ClpC protease or to other proteins involved in proteolysis. The sequence is that of Adapter protein MecA from Exiguobacterium sibiricum (strain DSM 17290 / CCUG 55495 / CIP 109462 / JCM 13490 / 255-15).